We begin with the raw amino-acid sequence, 349 residues long: Isopentenyl-diphosphate delta-isomerase (349 aa).

9–10 (RK) provides a ligand contact to substrate. FMN-binding positions include 65–67 (AMT), serine 95, and asparagine 124. Residue 95–97 (STH) participates in substrate binding. Glutamine 154 is a substrate binding site. Glutamate 155 contributes to the Mg(2+) binding site. FMN is bound by residues lysine 186, serine 211, threonine 216, 262–264 (GLR), and 283–284 (SR).

It belongs to the IPP isomerase type 2 family. As to quaternary structure, homooctamer. Dimer of tetramers. FMN serves as cofactor. Requires NADPH as cofactor. It depends on Mg(2+) as a cofactor.

It localises to the cytoplasm. It catalyses the reaction isopentenyl diphosphate = dimethylallyl diphosphate. Functionally, involved in the biosynthesis of isoprenoids. Catalyzes the 1,3-allylic rearrangement of the homoallylic substrate isopentenyl (IPP) to its allylic isomer, dimethylallyl diphosphate (DMAPP). This Staphylococcus aureus (strain JH1) protein is Isopentenyl-diphosphate delta-isomerase.